A 447-amino-acid polypeptide reads, in one-letter code: Alpha-1,6-mannosyl-glycoprotein 2-beta-N-acetylglucosaminyltransferase (447 aa).

Topologically, residues 1-9 (MRFRIYKRK) are cytoplasmic. A helical; Signal-anchor for type II membrane protein transmembrane segment spans residues 10–29 (VLILTLVVAACGFVLWSSNG). Residues 30–447 (RQRKNEALAP…ELCKSYRRLQ (418 aa)) lie on the Lumenal side of the membrane. Residues N69 and N86 are each glycosylated (N-linked (GlcNAc...) asparagine). Residues 123 to 127 (QVHNR) and D154 contribute to the substrate site. Residues C196 and C210 are joined by a disulfide bond. 229–233 (QTKHH) contributes to the substrate binding site. D261 lines the Mn(2+) pocket. An intrachain disulfide couples C283 to C286. R298 lines the substrate pocket. Cystine bridges form between C334–C357, C339–C440, and C378–C386. Residue H374 participates in Mn(2+) binding.

Belongs to the glycosyltransferase 16 (GT16) protein family. Homodimer. Mn(2+) is required as a cofactor.

The protein resides in the golgi apparatus membrane. It carries out the reaction an N(4)-{beta-D-GlcNAc-(1-&gt;2)-alpha-D-Man-(1-&gt;3)-[alpha-D-Man-(1-&gt;6)]-beta-D-Man-(1-&gt;4)-beta-D-GlcNAc-(1-&gt;4)-beta-D-GlcNAc}-L-asparaginyl-[protein] + UDP-N-acetyl-alpha-D-glucosamine = N(4)-{beta-D-GlcNAc-(1-&gt;2)-alpha-D-Man-(1-&gt;3)-[beta-D-GlcNAc-(1-&gt;2)-alpha-D-Man-(1-&gt;6)]-beta-D-Man-(1-&gt;4)-beta-D-GlcNAc-(1-&gt;4)-beta-D-GlcNAc}-L-asparaginyl-[protein] + UDP + H(+). It participates in protein modification; protein glycosylation. Its function is as follows. Plays an essential role in protein N-glycosylation. Catalyzes the transfer of N-acetylglucosamine (GlcNAc) onto the free terminal mannose moiety in the core structure of the nascent N-linked glycan chain, giving rise to the second branch in complex glycans. This is Alpha-1,6-mannosyl-glycoprotein 2-beta-N-acetylglucosaminyltransferase (MGAT2) from Homo sapiens (Human).